Consider the following 251-residue polypeptide: Large ribosomal subunit protein uL16m (251 aa).

The transit peptide at 1–29 directs the protein to the mitochondrion; that stretch reads MWRLLTRAPAPLWRMHFSDTWAALPTSAG.

The protein belongs to the universal ribosomal protein uL16 family. As to quaternary structure, component of the mitochondrial ribosome large subunit (39S) which comprises a 16S rRNA and about 50 distinct proteins.

The protein localises to the mitochondrion. The polypeptide is Large ribosomal subunit protein uL16m (Mrpl16) (Rattus norvegicus (Rat)).